Here is a 165-residue protein sequence, read N- to C-terminus: Nucleotide-binding protein A9601_05361 (165 aa).

It belongs to the YajQ family.

Nucleotide-binding protein. The protein is Nucleotide-binding protein A9601_05361 of Prochlorococcus marinus (strain AS9601).